An 85-amino-acid polypeptide reads, in one-letter code: Large ribosomal subunit protein bL27 (85 aa).

Residues 1 to 22 (MAHKKAGGSSRNGRDSHSKRLG) form a disordered region.

Belongs to the bacterial ribosomal protein bL27 family.

The polypeptide is Large ribosomal subunit protein bL27 (Nitrosomonas europaea (strain ATCC 19718 / CIP 103999 / KCTC 2705 / NBRC 14298)).